The following is a 757-amino-acid chain: Polyribonucleotide nucleotidyltransferase (757 aa).

Asp532 and Asp538 together coordinate Mg(2+). One can recognise a KH domain in the interval 598 to 657 (PRVTAIKVPVDKIGEVIGPKGKMINSITEQTGANISIEDDGTVFVGATDGPSAQAAIDMI). An S1 motif domain is found at 669-738 (GERFLGTVVK…NRGKISLIPV (70 aa)).

Belongs to the polyribonucleotide nucleotidyltransferase family. It depends on Mg(2+) as a cofactor.

The protein localises to the cytoplasm. It carries out the reaction RNA(n+1) + phosphate = RNA(n) + a ribonucleoside 5'-diphosphate. Involved in mRNA degradation. Catalyzes the phosphorolysis of single-stranded polyribonucleotides processively in the 3'- to 5'-direction. The sequence is that of Polyribonucleotide nucleotidyltransferase from Rhodococcus jostii (strain RHA1).